We begin with the raw amino-acid sequence, 323 residues long: MTKIITHLLNPLAVIIPILLAVAFLTLIERKVLGYMQLRKGPNIVGPYGLLQPLADGLKLFIKEPVRPSTSSPLLFITTPMLALTMALTLWLPLPLPHPMTNLNLGMLFILAISSLTVYSILGSGWASNLKYALIGALRAVAQTISYEVSLGLILLAMIIFAGGFTLTTFNTSQETIWLLTPGWPLAAMWYISTLAETNRAPFDLTEGESELVSGFNVEYAGGPFALFFLAEYANILLMNTLSTILFMGAMHNPITPELTSINLMIKASALSMLFLWVRASYPRFRYDQLMHLVWKNFLPITLAMILWHTSLPIFTGSLPPQT.

A run of 8 helical transmembrane segments spans residues 8–28, 74–94, 105–125, 150–170, 176–196, 227–247, 258–278, and 298–318; these read LLNP…LTLI, LLFI…WLPL, LGML…LGSG, SLGL…LTTF, TIWL…STLA, LFFL…TILF, ELTS…FLWV, and FLPI…FTGS.

The protein belongs to the complex I subunit 1 family.

Its subcellular location is the mitochondrion inner membrane. The catalysed reaction is a ubiquinone + NADH + 5 H(+)(in) = a ubiquinol + NAD(+) + 4 H(+)(out). Functionally, core subunit of the mitochondrial membrane respiratory chain NADH dehydrogenase (Complex I) that is believed to belong to the minimal assembly required for catalysis. Complex I functions in the transfer of electrons from NADH to the respiratory chain. The immediate electron acceptor for the enzyme is believed to be ubiquinone. The sequence is that of NADH-ubiquinone oxidoreductase chain 1 (MT-ND1) from Latimeria chalumnae (Coelacanth).